Here is a 330-residue protein sequence, read N- to C-terminus: tRNA (guanine(37)-N(1))-methyltransferase Trm5b (330 aa).

S-adenosyl-L-methionine-binding positions include Arg-173, 211-212, 238-239, and Asn-252; these read DI and DS.

This sequence belongs to the class I-like SAM-binding methyltransferase superfamily. TRM5/TYW2 family.

The protein localises to the cytoplasm. The enzyme catalyses guanosine(37) in tRNA + S-adenosyl-L-methionine = N(1)-methylguanosine(37) in tRNA + S-adenosyl-L-homocysteine + H(+). Its function is as follows. Specifically methylates the N1 position of guanosine-37 in various tRNAs. This is tRNA (guanine(37)-N(1))-methyltransferase Trm5b from Pyrococcus abyssi (strain GE5 / Orsay).